A 387-amino-acid polypeptide reads, in one-letter code: Exodeoxyribonuclease 7 large subunit (387 aa).

The protein belongs to the XseA family. Heterooligomer composed of large and small subunits.

It localises to the cytoplasm. The catalysed reaction is Exonucleolytic cleavage in either 5'- to 3'- or 3'- to 5'-direction to yield nucleoside 5'-phosphates.. In terms of biological role, bidirectionally degrades single-stranded DNA into large acid-insoluble oligonucleotides, which are then degraded further into small acid-soluble oligonucleotides. The polypeptide is Exodeoxyribonuclease 7 large subunit (Campylobacter jejuni (strain RM1221)).